Reading from the N-terminus, the 494-residue chain is MFNTKQQLTANKLLEFINQNTHKIFYLIGFAGSGKTYTISKITKKFLVDELIENIYYCAPTHKALKVLESYIKSNINASDKDLSNKIKFMTIHKLLEFKPIIQTETGSKVFKSTKESKFLKNISKNLVVIDECSMISQEMVDELNKYINLYPIKIIYMGDPKQLPPVGEVESLIFSTIPNNYQYHIVLDEIMRTNSVDIKAVCSVIRNWNLNDQINQKLIDVFNNSTTRRFRMYHIRNDYNKSSWFKSFIKEIQNNEVPIILTWKNSTSDYYNNIIRKFIHKSEEIDNYMINDYLMFNNYYASPENNESFFTSDMVKIIHTTTVTKILYNWSEQLISKPKTDLDRNYNSLIRKISKLDNEFKINILQVKRIQSDVVSSNNTDVHIIHVITFSDLNRYREMLKNIKEQIESFYKRFRIDTIVSKLWDIYHTKLIEPYAEINFGYSITSHKSQGSTYRSVYVDVKDICSNSNKTEMQKSLYTSAGRASERLGFMIE.

This is an uncharacterized protein from Acanthamoeba polyphaga (Amoeba).